Reading from the N-terminus, the 575-residue chain is Thiol:disulfide interchange protein DsbD (575 aa).

The first 24 residues, 1–24, serve as a signal peptide directing secretion; sequence MIKRTLMLFLLLCSPLLTPAAANA. 2 disulfides stabilise this stretch: Cys126/Cys132 and Cys192/Cys314. Helical transmembrane passes span 180–200, 216–236, 253–273, 297–317, 336–356, 367–387, 394–414, and 425–445; these read AILI…YPLI, IFWL…LLGL, YVLI…FGLY, LFGV…CTTA, GLTL…VTLF, WMQY…VFLL, AWGI…GFVL, and VIQL…QDWF. The 132-residue stretch at 444 to 575 folds into the Thioredoxin domain; sequence WFWGTTVTQQ…FNEHLQHLPK (132 aa). A disulfide bridge connects residues Cys490 and Cys493.

This sequence belongs to the thioredoxin family. DsbD subfamily.

Its subcellular location is the cell inner membrane. It carries out the reaction [protein]-dithiol + NAD(+) = [protein]-disulfide + NADH + H(+). It catalyses the reaction [protein]-dithiol + NADP(+) = [protein]-disulfide + NADPH + H(+). Its function is as follows. Required to facilitate the formation of correct disulfide bonds in some periplasmic proteins and for the assembly of the periplasmic c-type cytochromes. Acts by transferring electrons from cytoplasmic thioredoxin to the periplasm. This transfer involves a cascade of disulfide bond formation and reduction steps. The protein is Thiol:disulfide interchange protein DsbD of Photorhabdus laumondii subsp. laumondii (strain DSM 15139 / CIP 105565 / TT01) (Photorhabdus luminescens subsp. laumondii).